The following is a 255-amino-acid chain: 4-diphosphocytidyl-2-C-methyl-D-erythritol kinase (255 aa).

K6 is a catalytic residue. An ATP-binding site is contributed by 95–105 (PVCAGLGGGSS). D137 is an active-site residue.

This sequence belongs to the GHMP kinase family. IspE subfamily.

The catalysed reaction is 4-CDP-2-C-methyl-D-erythritol + ATP = 4-CDP-2-C-methyl-D-erythritol 2-phosphate + ADP + H(+). The protein operates within isoprenoid biosynthesis; isopentenyl diphosphate biosynthesis via DXP pathway; isopentenyl diphosphate from 1-deoxy-D-xylulose 5-phosphate: step 3/6. In terms of biological role, catalyzes the phosphorylation of the position 2 hydroxy group of 4-diphosphocytidyl-2C-methyl-D-erythritol. The sequence is that of 4-diphosphocytidyl-2-C-methyl-D-erythritol kinase from Campylobacter jejuni subsp. jejuni serotype O:23/36 (strain 81-176).